The chain runs to 399 residues: Presilphiperfolan-8-beta-ol synthase (399 aa).

The segment at 1–60 (MAIPALEPQLHDADTSSNNMSSNSTDSGYDTNSTTPLEKSEKPNTQELKQQQLDPKRPPF) is disordered. Residues 15 to 27 (TSSNNMSSNSTDS) are compositionally biased toward low complexity. Residues 28 to 37 (GYDTNSTTPL) show a composition bias toward polar residues. Residues aspartate 141, asparagine 285, and serine 289 each coordinate Mg(2+). A DDXXD motif motif is present at residues 141–145 (DDQFD). Residues arginine 373 and tyrosine 374 each contribute to the (2E,6E)-farnesyl diphosphate site.

This sequence belongs to the terpene synthase family. Mg(2+) serves as cofactor.

It catalyses the reaction (2E,6E)-farnesyl diphosphate + H2O = presilphiperfolan-8beta-ol + diphosphate. It participates in secondary metabolite biosynthesis. In terms of biological role, presilphiperfolan-8-beta-ol synthase; part of the gene cluster that mediates the biosynthesis of botrydial. Botrydial is necessary for colonization of plant tissue by the T4 strain. It is a strain-dependent virulence factor since highly aggressive strains like SAS56 or B05 still retain substantial virulence when botrydial synthesis is impaired, since they produce also botcinic acid. The first step of botrydial biosynthesis is performed by the sesquiterpene synthase BOT2 which catalyzes the cyclization of farnesyl diphosphate (FPP) to presilphiperfolan-8-beta-ol (PSP). The cytochrome P450 monooxygenase BOT4 then catalyzes the hydroxylation at C-4 to give a probotryane intermediate. Acetylation of the hydroxyl at C-4 is carried out by the acetyltransferase BOT5, followed by the combined action of the P450 monooxygenases BOT3 and BOT1, to yield finally the glycol, via the regio- and stereospecific hydroxylations at C-10 and C-15 of the probotryane intermediates, respectively. The cleavage of the C10-C15 bond of probotryane skeleton is an intriguing and chemically important reaction, which could be mediated by some of the monooxygenases or by a combination of them. It is possible that either BOT3 or BOT1 would oxidize either the 10- or the 15-hydroxy group to the hydroperoxide derivative, which would then undergo heterolytic fragmentation to give the dialdehyde botrydial. Finally, the dehydrogenase BOT7 might be involved in the conversion of botrydial to dihydrobotrydial. The sequence is that of Presilphiperfolan-8-beta-ol synthase (BOT2) from Botryotinia fuckeliana (Noble rot fungus).